The sequence spans 471 residues: Glutamate--tRNA ligase (471 aa).

A 'HIGH' region motif is present at residues 9–19 (PSPTGYLHVGG). The Zn(2+) site is built by Cys-98, Cys-100, Cys-125, and His-127. A 'KMSKS' region motif is present at residues 237-241 (KLSKR). An ATP-binding site is contributed by Lys-240.

The protein belongs to the class-I aminoacyl-tRNA synthetase family. Glutamate--tRNA ligase type 1 subfamily. As to quaternary structure, monomer. Zn(2+) is required as a cofactor.

Its subcellular location is the cytoplasm. The enzyme catalyses tRNA(Glu) + L-glutamate + ATP = L-glutamyl-tRNA(Glu) + AMP + diphosphate. In terms of biological role, catalyzes the attachment of glutamate to tRNA(Glu) in a two-step reaction: glutamate is first activated by ATP to form Glu-AMP and then transferred to the acceptor end of tRNA(Glu). This is Glutamate--tRNA ligase from Salmonella arizonae (strain ATCC BAA-731 / CDC346-86 / RSK2980).